Consider the following 144-residue polypeptide: Putative pre-16S rRNA nuclease (144 aa).

This sequence belongs to the YqgF nuclease family.

Its subcellular location is the cytoplasm. Its function is as follows. Could be a nuclease involved in processing of the 5'-end of pre-16S rRNA. This chain is Putative pre-16S rRNA nuclease, found in Lactiplantibacillus plantarum (strain ATCC BAA-793 / NCIMB 8826 / WCFS1) (Lactobacillus plantarum).